The chain runs to 890 residues: Alanine--tRNA ligase (890 aa).

Zn(2+)-binding residues include H569, H573, C671, and H675.

The protein belongs to the class-II aminoacyl-tRNA synthetase family. The cofactor is Zn(2+).

Its subcellular location is the cytoplasm. It carries out the reaction tRNA(Ala) + L-alanine + ATP = L-alanyl-tRNA(Ala) + AMP + diphosphate. Its function is as follows. Catalyzes the attachment of alanine to tRNA(Ala) in a two-step reaction: alanine is first activated by ATP to form Ala-AMP and then transferred to the acceptor end of tRNA(Ala). Also edits incorrectly charged Ser-tRNA(Ala) and Gly-tRNA(Ala) via its editing domain. This is Alanine--tRNA ligase from Synechococcus sp. (strain CC9902).